The chain runs to 117 residues: Large ribosomal subunit protein uL18 (117 aa).

It belongs to the universal ribosomal protein uL18 family. In terms of assembly, part of the 50S ribosomal subunit; part of the 5S rRNA/L5/L18/L25 subcomplex. Contacts the 5S and 23S rRNAs.

Its function is as follows. This is one of the proteins that bind and probably mediate the attachment of the 5S RNA into the large ribosomal subunit, where it forms part of the central protuberance. In Francisella tularensis subsp. novicida (strain U112), this protein is Large ribosomal subunit protein uL18.